Reading from the N-terminus, the 1076-residue chain is Guanylyl cyclase C (1076 aa).

The N-terminal stretch at 1-23 (MKSPLLGLVVWSLLLQLLQPGLA) is a signal peptide. The Extracellular portion of the chain corresponds to 24–433 (FWNSQISQNC…PHDIPGLGPH (410 aa)). N-linked (GlcNAc...) asparagine glycosylation is found at Asn-35, Asn-82, Asn-191, Asn-198, Asn-287, Asn-306, Asn-310, Asn-348, and Asn-405. A helical membrane pass occupies residues 434–457 (ILLIAVCTLAGVVVLILLIALLVL). At 458 to 1076 (RKYKKDNELR…NTTDQDSTYF (619 aa)) the chain is on the cytoplasmic side. A Protein kinase domain is found at 492 to 752 (LKIDDDKKRD…KIENTLAKIF (261 aa)). One can recognise a Guanylate cyclase domain in the interval 827 to 957 (TVYFSDIVGF…DTVNTASRME (131 aa)).

Belongs to the adenylyl cyclase class-4/guanylyl cyclase family. Homotrimer. Interacts via its C-terminal region with NHERF4. Interacts with the lectin chaperone VIP36. In terms of processing, glycosylation at Asn-62 is required for interaction with VIP36 while glycosylation at Asn-348 and Asn-405 modulates ligand-mediated GC-C activation.

It is found in the cell membrane. It localises to the endoplasmic reticulum membrane. It carries out the reaction GTP = 3',5'-cyclic GMP + diphosphate. In terms of biological role, guanylyl cyclase that catalyzes synthesis of cyclic GMP (cGMP) from GTP. This Cavia porcellus (Guinea pig) protein is Guanylyl cyclase C (GUCY2C).